A 174-amino-acid chain; its full sequence is Actin-related protein 2/3 complex subunit 3 (174 aa).

The protein belongs to the ARPC3 family. In terms of assembly, component of the Arp2/3 complex composed of arp2, act2, arc1/p41-ARC, arc2/p34-ARC, arc3/p21-ARC, arc4/p20-ARC and arc5/p16-ARC.

It localises to the cytoplasm. It is found in the cytoskeleton. The protein localises to the actin patch. Its function is as follows. Functions as a component of the Arp2/3 complex which is involved in regulation of actin polymerization and together with an activating nucleation-promoting factor (NPF) mediates the formation of branched actin networks. This is Actin-related protein 2/3 complex subunit 3 (arc3) from Schizosaccharomyces pombe (strain 972 / ATCC 24843) (Fission yeast).